Consider the following 1394-residue polypeptide: DNA-directed RNA polymerase subunit beta' (1394 aa).

C71, C73, C86, and C89 together coordinate Zn(2+). 3 residues coordinate Mg(2+): D462, D464, and D466. Positions 810, 883, 890, and 893 each coordinate Zn(2+).

This sequence belongs to the RNA polymerase beta' chain family. The RNAP catalytic core consists of 2 alpha, 1 beta, 1 beta' and 1 omega subunit. When a sigma factor is associated with the core the holoenzyme is formed, which can initiate transcription. Mg(2+) is required as a cofactor. It depends on Zn(2+) as a cofactor.

It carries out the reaction RNA(n) + a ribonucleoside 5'-triphosphate = RNA(n+1) + diphosphate. Its function is as follows. DNA-dependent RNA polymerase catalyzes the transcription of DNA into RNA using the four ribonucleoside triphosphates as substrates. This is DNA-directed RNA polymerase subunit beta' from Beijerinckia indica subsp. indica (strain ATCC 9039 / DSM 1715 / NCIMB 8712).